Consider the following 655-residue polypeptide: Carboxypeptidase S1 homolog B (655 aa).

The first 21 residues, 1–21, serve as a signal peptide directing secretion; that stretch reads MRPFARAALCLLAAAGHLAQA. A disulfide bridge links C51 with C123. N-linked (GlcNAc...) asparagine glycans are attached at residues N130, N163, and N186. Residue S240 is part of the active site. N266, N302, and N311 each carry an N-linked (GlcNAc...) asparagine glycan. Disulfide bonds link C328/C364 and C335/C357. N414 carries N-linked (GlcNAc...) asparagine glycosylation. D459 is a catalytic residue. Residue C462 participates in substrate binding. 3 N-linked (GlcNAc...) asparagine glycosylation sites follow: N475, N493, and N506. Residue H517 is part of the active site. E518 lines the substrate pocket. N598 and N612 each carry an N-linked (GlcNAc...) asparagine glycan. Residue G631 is the site of GPI-anchor amidated glycine attachment. A propeptide spans 632-655 (removed in mature form); that stretch reads AALVSGRIKFHVHVIKSFDYYIFI.

The protein belongs to the peptidase S10 family.

It is found in the cell membrane. The catalysed reaction is Preferential release of a C-terminal arginine or lysine residue.. In terms of biological role, extracellular serine carboxypeptidase that contributes to pathogenicity. This is Carboxypeptidase S1 homolog B (SCPB) from Arthroderma otae (strain ATCC MYA-4605 / CBS 113480) (Microsporum canis).